The primary structure comprises 2617 residues: Non-reducing polyketide synthase epaA (2617 aa).

Positions 95–231 (PNILLSPMVV…AARSISSLQQ (137 aa)) are N-terminal acylcarrier protein transacylase domain (SAT). The active-site Nucleophile; for transacylase activity is the Cys132. The active-site Proton donor/acceptor; for transacylase activity is the His250. The Ketosynthase family 3 (KS3) domain occupies 372–790 (PNEIAVIGMS…GSNASMVVAQ (419 aa)). Residues Cys539, His674, and His713 each act as for beta-ketoacyl synthase activity in the active site. Positions 902 to 1193 (FGGQISNYVG…ITSMASRALG (292 aa)) are malonyl-CoA:ACP transacylase (MAT) domain. The N-terminal hotdog fold stretch occupies residues 1282-1413 (PKTLWSLIEA…GKLAFLSGQD (132 aa)). The PKS/mFAS DH domain occupies 1282–1591 (PKTLWSLIEA…YHKVAKASMS (310 aa)). A product template (PT) domain region spans residues 1310–1589 (LVSGHVIANT…INYHKVAKAS (280 aa)). His1314 acts as the Proton acceptor; for dehydratase activity in catalysis. The segment at 1443 to 1591 (ADDIIQGRNI…YHKVAKASMS (149 aa)) is C-terminal hotdog fold. Asp1499 serves as the catalytic Proton donor; for dehydratase activity. The segment at 1600–1651 (TEAAPSSSTRAHPTSSSSPRLPGPSVPEDKSQNETQPAGTNAVAKKKSEKSA) is disordered. A compositionally biased stretch (low complexity) spans 1602-1619 (AAPSSSTRAHPTSSSSPR). The 75-residue stretch at 1653–1727 (QNVLEKTRAL…GLVEYVQSAV (75 aa)) folds into the Carrier domain. Ser1687 carries the post-translational modification O-(pantetheine 4'-phosphoryl)serine. A disordered region spans residues 1728 to 1799 (GVPTNGDEPD…PAMPPASSKT (72 aa)). Over residues 1750–1766 (LAPSPSSSSSSTNLTED) the composition is skewed to low complexity. The segment covering 1769 to 1785 (LDQAETTTNISSYPGQT) has biased composition (polar residues). The methyltransferase domain stretch occupies residues 1970-2158 (DSLLNKLSYR…VGYGQVDWTD (189 aa)). Residues 2240-2485 (ITGATGSLGV…LCWTPVNDVA (246 aa)) are NADPH-binding (R) domain.

Requires pantetheine 4'-phosphate as cofactor.

It participates in secondary metabolite biosynthesis. In terms of biological role, non-reducing polyketide synthase; part of the gene cluster that mediates the biosynthesis of nigerpyrone and its derivatives carbonarone A and pestalamide A. The biosynthesis pathway begins with the polyketide assembly by epaA to form phenylacetyl triketide precursor from successive condensation of two malonyl-CoA, presumably with one phenylacetyl-CoA starter unit produced by the phenylacetyl-CoA ligase epaB. For the nigerpyrone biosynthesis, the reactive polyketide chain is released as an aldehyde through the R-domain. A nonenzymatic cyclization and dehydration may create nigerpyrone. For the biosynthesis of carbonarone A and pestalamide A, an extra methyl group is added through the C-methyltransferase domain. Several further steps involving the dehydrogenase orf1, the cytochrome P450 monooxygenase orf2 and the FAD-dependent monooxygenase orf3 are required to form a carbonarone A precursor which is converted to carbonarone A via cyclization. The O-acetyltransferase epaC could catalyze the transfer of 2-methylsuccinyl-CoA, a common intermediate in the ethylmalonyl-CoA pathway, to generate the final product pestalamide A. The protein is Non-reducing polyketide synthase epaA of Aspergillus niger (strain ATCC MYA-4892 / CBS 513.88 / FGSC A1513).